A 313-amino-acid chain; its full sequence is Methionyl-tRNA formyltransferase (313 aa).

110-113 (SLLP) is a (6S)-5,6,7,8-tetrahydrofolate binding site.

The protein belongs to the Fmt family.

The enzyme catalyses L-methionyl-tRNA(fMet) + (6R)-10-formyltetrahydrofolate = N-formyl-L-methionyl-tRNA(fMet) + (6S)-5,6,7,8-tetrahydrofolate + H(+). Functionally, attaches a formyl group to the free amino group of methionyl-tRNA(fMet). The formyl group appears to play a dual role in the initiator identity of N-formylmethionyl-tRNA by promoting its recognition by IF2 and preventing the misappropriation of this tRNA by the elongation apparatus. This chain is Methionyl-tRNA formyltransferase, found in Enterococcus faecalis (strain ATCC 700802 / V583).